Reading from the N-terminus, the 235-residue chain is Uridylate kinase (235 aa).

9-12 (KLSG) provides a ligand contact to ATP. Gly-51 serves as a coordination point for UMP. ATP contacts are provided by Gly-52 and Arg-56. Residues Asp-71 and 132–139 (TGNPYFTT) each bind UMP. ATP contacts are provided by Thr-159, Tyr-165, and Asp-168.

It belongs to the UMP kinase family. In terms of assembly, homohexamer.

It localises to the cytoplasm. The catalysed reaction is UMP + ATP = UDP + ADP. It participates in pyrimidine metabolism; CTP biosynthesis via de novo pathway; UDP from UMP (UMPK route): step 1/1. Inhibited by UTP. Catalyzes the reversible phosphorylation of UMP to UDP. This is Uridylate kinase from Christiangramia forsetii (strain DSM 17595 / CGMCC 1.15422 / KT0803) (Gramella forsetii).